The primary structure comprises 250 residues: Uridylate kinase (250 aa).

ATP is bound at residue Lys-19 to Gly-22. UMP is bound at residue Gly-61. ATP is bound by residues Gly-62 and Arg-66. UMP contacts are provided by residues Asp-81 and Thr-142–Thr-149. ATP is bound by residues Thr-169, Gln-170, Tyr-175, and Asp-178.

This sequence belongs to the UMP kinase family. In terms of assembly, homohexamer.

The protein resides in the cytoplasm. It carries out the reaction UMP + ATP = UDP + ADP. It participates in pyrimidine metabolism; CTP biosynthesis via de novo pathway; UDP from UMP (UMPK route): step 1/1. Its activity is regulated as follows. Inhibited by UTP. Catalyzes the reversible phosphorylation of UMP to UDP. This chain is Uridylate kinase, found in Rhodospirillum rubrum (strain ATCC 11170 / ATH 1.1.1 / DSM 467 / LMG 4362 / NCIMB 8255 / S1).